The chain runs to 302 residues: Spermidine synthase (302 aa).

Position 1 is an N-acetylmethionine (methionine 1). A PABS domain is found at 18–253 (EGWFRETCSL…GQIGFMLCSK (236 aa)). Glutamine 49 serves as a coordination point for S-adenosyl 3-(methylsulfanyl)propylamine. Tyrosine 79 serves as a coordination point for putrescine. S-adenosyl 3-(methylsulfanyl)propylamine contacts are provided by residues glutamine 80, aspartate 104, glutamate 124, 155–156 (DG), and aspartate 173. Aspartate 173 serves as the catalytic Proton acceptor. Putrescine contacts are provided by residues 173–176 (DSSD) and tyrosine 241.

Belongs to the spermidine/spermine synthase family. In terms of assembly, homodimer or homotetramer.

The enzyme catalyses S-adenosyl 3-(methylsulfanyl)propylamine + putrescine = S-methyl-5'-thioadenosine + spermidine + H(+). The protein operates within amine and polyamine biosynthesis; spermidine biosynthesis; spermidine from putrescine: step 1/1. The activity is thought to be regulated mainly by the availability of decarboxylated S-adenosylmethionine. In terms of biological role, catalyzes the production of spermidine from putrescine and decarboxylated S-adenosylmethionine (dcSAM). Has a strong preference for putrescine as substrate, and has very low activity towards 1,3-diaminopropane. Has extremely low activity towards spermidine. The chain is Spermidine synthase (Srm) from Mus musculus (Mouse).